The following is a 468-amino-acid chain: Nicotinamide phosphoribosyltransferase (468 aa).

Arg-180 contributes to the diphosphate binding site. Asp-203 contacts beta-nicotinamide D-ribonucleotide. Diphosphate is bound by residues His-229 and Arg-293. Position 229 is a phosphohistidine; by autocatalysis (His-229). Beta-nicotinamide D-ribonucleotide contacts are provided by Asp-335 and Arg-373.

This sequence belongs to the NAPRTase family. In terms of assembly, homodimer. The dimeric structure consists of two protomers arranged head to tail, with domain A on one protomer interacting with domain B on the other protomer. Post-translationally, phosphorylation at His-229 plays a crucial role in enhancing the substrate affinity and is important for maintaining enzymatic activity.

The enzyme catalyses beta-nicotinamide D-ribonucleotide + diphosphate = 5-phospho-alpha-D-ribose 1-diphosphate + nicotinamide + H(+). Its pathway is cofactor biosynthesis; NAD(+) biosynthesis; nicotinamide D-ribonucleotide from 5-phospho-alpha-D-ribose 1-diphosphate and nicotinamide: step 1/1. Its activity is regulated as follows. ATP-dependent autophosphorylation plays a vital role in nicotinamide binding and enzyme activation. Activity is inhibited by FK866. Its function is as follows. Catalyzes the condensation of nicotinamide with 5-phosphoribosyl-1-pyrophosphate to yield nicotinamide mononucleotide, an intermediate in the biosynthesis of NAD. Plays an important role in the biosynthesis of NAD via the nicotinamide (NAM) salvage pathway. Is also capable of hydrolyzing ATP and shows ATP-dependent autophosphorylation activity. The sequence is that of Nicotinamide phosphoribosyltransferase from Xanthomonas campestris pv. campestris (strain 8004).